The following is a 235-amino-acid chain: V-type proton ATPase subunit E2 (235 aa).

M1 carries the post-translational modification N-acetylmethionine. Positions 8–64 (KQIQQMVRFIRQEAEEKANEISISAEEEFNIERLQLLESAKRKLRQDYDRKLKQVDI) form a coiled coil.

This sequence belongs to the V-ATPase E subunit family. V-ATPase is a heteromultimeric enzyme composed of a peripheral catalytic V1 complex (components A to H) attached to an integral membrane V0 proton pore complex (components: a, c, c'', d and e).

It localises to the vacuole membrane. Its function is as follows. Subunit of the peripheral V1 complex of vacuolar ATPase essential for assembly or catalytic function. V-ATPase is responsible for acidifying a variety of intracellular compartments in eukaryotic cells. This Arabidopsis thaliana (Mouse-ear cress) protein is V-type proton ATPase subunit E2 (VHA-E2).